The chain runs to 671 residues: Probable potassium transport system protein Kup (671 aa).

Residues 1 to 43 (MSQIPSPNDPASTGAAPSSAAVPAGPSATPAPSPTAGFSLPGH) form a disordered region. Low complexity predominate over residues 10–37 (PASTGAAPSSAAVPAGPSATPAPSPTAG). A run of 12 helical transmembrane segments spans residues 52 to 72 (LAALAVGALGVVYGDIGTSPL), 92 to 112 (VLGVLSLVFWAMTFVVTFKYM), 147 to 167 (LMLGLFGAALLYGDGIITPAI), 181 to 201 (PAMERAVVPATVVILVFLFLF), 209 to 229 (VGAVFGPVMLVWFATIAVLGV), 255 to 275 (GWHGFLVLGGVVLVITGGEAL), 291 to 311 (WLGLAMPALLLNYLGQGALLL), 323 to 343 (LLAPEWALYPTIAIATAAAIV), 381 to 401 (IYLPEVNWMLGTACLALVLGF), 407 to 427 (LASAYGIAVTGTMIVTTLLFH), 441 to 461 (AWPLTSLFLTVDASFFLANVV), and 465 to 485 (DGGWFPIAAAALVFTLMSTWK).

Belongs to the HAK/KUP transporter (TC 2.A.72) family.

The protein localises to the cell inner membrane. It carries out the reaction K(+)(in) + H(+)(in) = K(+)(out) + H(+)(out). Its function is as follows. Transport of potassium into the cell. Likely operates as a K(+):H(+) symporter. This chain is Probable potassium transport system protein Kup, found in Anaeromyxobacter sp. (strain K).